We begin with the raw amino-acid sequence, 136 residues long: Neuropeptide CCHamide-2 (136 aa).

A signal peptide spans 1 to 24 (MKSTISLLLVVICTVVLAAQQSQA). Cysteine 28 and cysteine 35 are oxidised to a cystine. Histidine 39 is subject to Histidine amide. The tract at residues 42–78 (RSLSPGSGSGTGVGGGMGEAASGGQEPDYVRPNGLLP) is disordered. A propeptide spanning residues 43-136 (SLSPGSGSGT…ANSAELNGVN (94 aa)) is cleaved from the precursor. Residues 48–59 (SGSGTGVGGGMG) are compositionally biased toward gly residues.

Expressed in endocrine cells of the larval midgut (at protein level). Also expressed in endocrine cells of the midgut of adult males and females (at protein level). In the midgut, expression occurs mainly in the anterior region (at protein level). In the larval central nervous system, expressed in about 40 neurons in the brain hemispheres and ventral nerve cord (at protein level). Highly expressed in larval and adult gut with low levels in larval and adult brain. Very little expression in the larval fat body. However, another study shows high levels of expression in the larval fat body as well as the larval gut with low levels in the larval central nervous system.

Its subcellular location is the secreted. In terms of biological role, ligand for the CCHamide-2 receptor CCHa2-R. In one study, shown to be an orexigenic peptide which induces appetite and stimulates food intake, leading to the release of insulin-like peptides which stimulate growth. In another study, shown to be a nutrient-sensitive peptide derived from peripheral tissues which controls growth by directly regulating the production and release of insulin-like peptides. The sequence is that of Neuropeptide CCHamide-2 from Drosophila melanogaster (Fruit fly).